A 244-amino-acid polypeptide reads, in one-letter code: Phosphoadenosine 5'-phosphosulfate reductase (244 aa).

C239 acts as the Nucleophile; cysteine thiosulfonate intermediate in catalysis.

It belongs to the PAPS reductase family. CysH subfamily.

The protein localises to the cytoplasm. It catalyses the reaction [thioredoxin]-disulfide + sulfite + adenosine 3',5'-bisphosphate + 2 H(+) = [thioredoxin]-dithiol + 3'-phosphoadenylyl sulfate. Its pathway is sulfur metabolism; hydrogen sulfide biosynthesis; sulfite from sulfate: step 3/3. In terms of biological role, catalyzes the formation of sulfite from phosphoadenosine 5'-phosphosulfate (PAPS) using thioredoxin as an electron donor. This Salmonella choleraesuis (strain SC-B67) protein is Phosphoadenosine 5'-phosphosulfate reductase.